The sequence spans 413 residues: DnaJ protein homolog xdj1 (413 aa).

The 68-residue stretch at 6–73 (KLYDILEVHF…ESREMYDMYG (68 aa)) folds into the J domain. The CR-type zinc finger occupies 134 to 219 (GKEVKLRATR…CKGSGTVPEQ (86 aa)). CXXCXGXG motif repeat units follow at residues 147-154 (CPRCQGRG), 164-171 (CLSCDGKG), 191-198 (CDTCNGKG), and 207-214 (CKHCKGSG). A Cysteine methyl ester modification is found at Cys-410. Cys-410 carries the S-farnesyl cysteine lipid modification. A propeptide spans 411 to 413 (QAQ) (removed in mature form).

Its subcellular location is the endoplasmic reticulum membrane. The chain is DnaJ protein homolog xdj1 (xdj1) from Schizosaccharomyces pombe (strain 972 / ATCC 24843) (Fission yeast).